The chain runs to 594 residues: RING finger protein 207 (594 aa).

An RING-type zinc finger spans residues 25-64 (CPLCHAQYERPCLLDCFHDFCAGCLRGRTADGRVACPLCQ). The segment at 93 to 145 (VEAVHCANCDLDCSKQDAETACFCNTCGQPLCARCRDETHRARMFARHDIVAL) adopts a B box-type; atypical zinc-finger fold. Residues Cys-98, Cys-101, Cys-127, and His-132 each contribute to the Zn(2+) site. The tract at residues 369-400 (NTLAGGSGPKVLMGPSCPSPVRKVSRSPVQKP) is disordered. Residues 424 to 458 (CRHYEDSYRGLQAEVQNLKDQVQELHRDLTKHHSL) adopt a coiled-coil conformation. A disordered region spans residues 552-594 (FQASADDESENPQTAYDASRNGETPASLLLPGSVASAEPPFVN). A compositionally biased stretch (polar residues) spans 562 to 575 (NPQTAYDASRNGET).

In terms of assembly, interacts with the core-glycosylated, but not the fully glycosylated form of KCNH2/HERG. Interacts with DNAJA1 and HSPA8. Interacts (via the C-terminus) with HSPA1A; this interaction additively increases KCNH2 expression.

It is found in the cytoplasm. Its function is as follows. Plays a role in cardiac repolarization possibly by stabilizing membrane expression of the potassium channel KCNH2/HERG, or by assisting its synthesis, folding or export from the endoplasmic reticulum, in a heat shock protein-dependent manner. The protein is RING finger protein 207 (RNF207) of Oryctolagus cuniculus (Rabbit).